The following is a 145-amino-acid chain: D-aminoacyl-tRNA deacylase (145 aa).

Positions 137–138 (GP) match the Gly-cisPro motif, important for rejection of L-amino acids motif.

It belongs to the DTD family. As to quaternary structure, homodimer.

The protein resides in the cytoplasm. The catalysed reaction is glycyl-tRNA(Ala) + H2O = tRNA(Ala) + glycine + H(+). The enzyme catalyses a D-aminoacyl-tRNA + H2O = a tRNA + a D-alpha-amino acid + H(+). Its function is as follows. An aminoacyl-tRNA editing enzyme that deacylates mischarged D-aminoacyl-tRNAs. Also deacylates mischarged glycyl-tRNA(Ala), protecting cells against glycine mischarging by AlaRS. Acts via tRNA-based rather than protein-based catalysis; rejects L-amino acids rather than detecting D-amino acids in the active site. By recycling D-aminoacyl-tRNA to D-amino acids and free tRNA molecules, this enzyme counteracts the toxicity associated with the formation of D-aminoacyl-tRNA entities in vivo and helps enforce protein L-homochirality. The protein is D-aminoacyl-tRNA deacylase of Shewanella oneidensis (strain ATCC 700550 / JCM 31522 / CIP 106686 / LMG 19005 / NCIMB 14063 / MR-1).